The sequence spans 594 residues: Proteasome-associated ATPase (594 aa).

The segment covering 1 to 10 has biased composition (polar residues); it reads MMETPNNDSS. A disordered region spans residues 1-23; it reads MMETPNNDSSRTPDEAAGAPDPE. A coiled-coil region spans residues 35–86; the sequence is ADRQVNILRDKLRHIDRQLAAATQNNSKLVGMLETAKAEILRLKNALDQEGQ. 282 to 287 contacts ATP; that stretch reads GCGKTL. The segment at 593–594 is docks into pockets in the proteasome alpha-ring; it reads YL.

This sequence belongs to the AAA ATPase family. In terms of assembly, homohexamer. Assembles into a hexameric ring structure that caps the 20S proteasome core. Strongly interacts with the prokaryotic ubiquitin-like protein Pup through a hydrophobic interface; the interacting region of ARC lies in its N-terminal coiled-coil domain. There is one Pup binding site per ARC hexamer ring. Upon ATP-binding, the C-terminus of ARC interacts with the alpha-rings of the proteasome core, possibly by binding to the intersubunit pockets.

Its pathway is protein degradation; proteasomal Pup-dependent pathway. ATPase which is responsible for recognizing, binding, unfolding and translocation of pupylated proteins into the bacterial 20S proteasome core particle. May be essential for opening the gate of the 20S proteasome via an interaction with its C-terminus, thereby allowing substrate entry and access to the site of proteolysis. Thus, the C-termini of the proteasomal ATPase may function like a 'key in a lock' to induce gate opening and therefore regulate proteolysis. In Arthrobacter sp. (strain FB24), this protein is Proteasome-associated ATPase.